The sequence spans 490 residues: ATP synthase subunit beta, plastid (490 aa).

ATP is bound at residue 170-177 (GGAGVGKT).

Belongs to the ATPase alpha/beta chains family. As to quaternary structure, F-type ATPases have 2 components, CF(1) - the catalytic core - and CF(0) - the membrane proton channel. CF(1) has five subunits: alpha(3), beta(3), gamma(1), delta(1), epsilon(1). CF(0) has four main subunits: a(1), b(1), b'(1) and c(9-12).

Its subcellular location is the plastid membrane. It carries out the reaction ATP + H2O + 4 H(+)(in) = ADP + phosphate + 5 H(+)(out). Functionally, produces ATP from ADP in the presence of a proton gradient across the membrane. The catalytic sites are hosted primarily by the beta subunits. The chain is ATP synthase subunit beta, plastid from Cuscuta exaltata (Tall dodder).